Consider the following 373-residue polypeptide: 3-dehydroquinate synthase (373 aa).

NAD(+) is bound by residues aspartate 74–lysine 79, glycine 108–aspartate 112, threonine 132–threonine 133, lysine 145, lysine 154, and threonine 172–threonine 175. Zn(2+) is bound by residues glutamate 187, histidine 250, and histidine 266.

This sequence belongs to the sugar phosphate cyclases superfamily. Dehydroquinate synthase family. Co(2+) serves as cofactor. The cofactor is Zn(2+). NAD(+) is required as a cofactor.

The protein resides in the cytoplasm. It carries out the reaction 7-phospho-2-dehydro-3-deoxy-D-arabino-heptonate = 3-dehydroquinate + phosphate. Its pathway is metabolic intermediate biosynthesis; chorismate biosynthesis; chorismate from D-erythrose 4-phosphate and phosphoenolpyruvate: step 2/7. Its function is as follows. Catalyzes the conversion of 3-deoxy-D-arabino-heptulosonate 7-phosphate (DAHP) to dehydroquinate (DHQ). This chain is 3-dehydroquinate synthase, found in Nocardia farcinica (strain IFM 10152).